Consider the following 587-residue polypeptide: Chaperonin GroEL 1 (587 aa).

Residues 29–32, 86–90, G413, and D492 contribute to the ATP site; these read TIGP and DGTTT.

It belongs to the chaperonin (HSP60) family. Forms a cylinder of 14 subunits composed of two heptameric rings stacked back-to-back. Interacts with the co-chaperonin GroES.

It is found in the cytoplasm. The catalysed reaction is ATP + H2O + a folded polypeptide = ADP + phosphate + an unfolded polypeptide.. In terms of biological role, together with its co-chaperonin GroES, plays an essential role in assisting protein folding. The GroEL-GroES system forms a nano-cage that allows encapsulation of the non-native substrate proteins and provides a physical environment optimized to promote and accelerate protein folding. This Prochlorococcus marinus (strain MIT 9515) protein is Chaperonin GroEL 1.